The following is a 695-amino-acid chain: Elongation factor G 1 (695 aa).

The tr-type G domain maps to 6-282; that stretch reads STFRNIGISA…AITYYLPDPT (277 aa). GTP is bound by residues 15 to 22, 82 to 86, and 136 to 139; these read AHIDSGKT, DTPGH, and NKCD.

This sequence belongs to the TRAFAC class translation factor GTPase superfamily. Classic translation factor GTPase family. EF-G/EF-2 subfamily.

Its subcellular location is the cytoplasm. Its function is as follows. Catalyzes the GTP-dependent ribosomal translocation step during translation elongation. During this step, the ribosome changes from the pre-translocational (PRE) to the post-translocational (POST) state as the newly formed A-site-bound peptidyl-tRNA and P-site-bound deacylated tRNA move to the P and E sites, respectively. Catalyzes the coordinated movement of the two tRNA molecules, the mRNA and conformational changes in the ribosome. This chain is Elongation factor G 1 (fusA), found in Treponema pallidum (strain Nichols).